The sequence spans 105 residues: QPKSDPLVTLFLPSLKNLQANKVTLVCLVSEFYPGTLVVDWKVDGVPVTQGVETTQPSKQTNNKYMVSSYLTLISDQWMPHSRYSCRVTHEGNTVEKSVSPAECS.

A c region region spans residues 1–105 (QPKSDPLVTL…EKSVSPAECS (105 aa)). An Ig-like C1-type domain is found at 6-100 (PLVTLFLPSL…EGNTVEKSVS (95 aa)). The cysteines at positions 27 and 86 are disulfide-linked.

In terms of assembly, associates non-covalently with VPREB1A. Interacts with SYNV1/HRD1 (via N-terminus); this interaction leads to increased IGLL1 ubiquitination and degradation in pre-B cells, possibly through a lysosomal, not proteasomal, pathway.

The protein localises to the endoplasmic reticulum. The protein resides in the secreted. Functionally, critical for B-cell development. In Mus spretus (Western Mediterranean mouse), this protein is Immunoglobulin lambda-like polypeptide 1 (Igll1).